Reading from the N-terminus, the 137-residue chain is Putative protein YjhV (137 aa).

Over residues 1–16 the composition is skewed to polar residues; the sequence is MVGYHQTNQKTDTGKT. A disordered region spans residues 1–20; the sequence is MVGYHQTNQKTDTGKTLTRR.

In Escherichia coli (strain K12), this protein is Putative protein YjhV (yjhV).